A 156-amino-acid chain; its full sequence is MSRRKKAPIRQVLSDPIFNSKTITKLINTIMLDGKKSIAERILYQAFEIIKTKTNKDPMEVFQLALDNITPQLEVKTRRVGGTNYQVPMEVTKRRKETLSLRWLIHYSRLRSEKTMQECLANEIIDASNKTGSSIKKREDTHKMAEANKAFAHFRW.

The protein belongs to the universal ribosomal protein uS7 family. As to quaternary structure, part of the 30S ribosomal subunit. Contacts proteins S9 and S11.

Functionally, one of the primary rRNA binding proteins, it binds directly to 16S rRNA where it nucleates assembly of the head domain of the 30S subunit. Is located at the subunit interface close to the decoding center, probably blocks exit of the E-site tRNA. The protein is Small ribosomal subunit protein uS7 of Mycoplasma mobile (strain ATCC 43663 / 163K / NCTC 11711) (Mesomycoplasma mobile).